A 135-amino-acid chain; its full sequence is Fluoride-specific ion channel FluC 1 (135 aa).

Helical transmembrane passes span 7-27, 32-52, 65-85, and 96-116; these read LAVG…GLVL, GFPY…PFLM, LALA…SFSV, and WSAF…LSLL. G75 and T78 together coordinate Na(+).

It belongs to the fluoride channel Fluc/FEX (TC 1.A.43) family.

The protein localises to the cell membrane. The catalysed reaction is fluoride(in) = fluoride(out). Its activity is regulated as follows. Na(+) is not transported, but it plays an essential structural role and its presence is essential for fluoride channel function. Fluoride-specific ion channel. Important for reducing fluoride concentration in the cell, thus reducing its toxicity. The polypeptide is Fluoride-specific ion channel FluC 1 (Latilactobacillus sakei subsp. sakei (strain 23K) (Lactobacillus sakei subsp. sakei)).